Reading from the N-terminus, the 388-residue chain is Protochlorophyllide reductase A, chloroplastic (388 aa).

The N-terminal 74 residues, 1-74 (MALQLLPSTL…SPSGKKTLRQ (74 aa)), are a transit peptide targeting the chloroplast. A compositionally biased stretch (low complexity) spans 48–68 (VATAPSPVTTSPGSTASSPSG). The segment at 48 to 69 (VATAPSPVTTSPGSTASSPSGK) is disordered.

It belongs to the short-chain dehydrogenases/reductases (SDR) family. POR subfamily.

It localises to the plastid. The protein resides in the chloroplast. It carries out the reaction chlorophyllide a + NADP(+) = protochlorophyllide a + NADPH + H(+). It participates in porphyrin-containing compound metabolism; chlorophyll biosynthesis. Phototransformation of protochlorophyllide (Pchlide) to chlorophyllide (Chlide). This chain is Protochlorophyllide reductase A, chloroplastic (PORA), found in Hordeum vulgare (Barley).